The chain runs to 360 residues: Dual-specificity RNA methyltransferase RlmN (360 aa).

Residue glutamate 89 is the Proton acceptor of the active site. The Radical SAM core domain occupies 95–330 (DSGRGTLCVS…TRVTRGQDID (236 aa)). Cysteine 102 and cysteine 333 are oxidised to a cystine. Residues cysteine 109, cysteine 113, and cysteine 116 each contribute to the [4Fe-4S] cluster site. S-adenosyl-L-methionine is bound by residues 159–160 (GE), serine 191, 213–215 (SLH), and asparagine 290. Catalysis depends on cysteine 333, which acts as the S-methylcysteine intermediate.

The protein belongs to the radical SAM superfamily. RlmN family. Requires [4Fe-4S] cluster as cofactor.

Its subcellular location is the cytoplasm. It catalyses the reaction adenosine(2503) in 23S rRNA + 2 reduced [2Fe-2S]-[ferredoxin] + 2 S-adenosyl-L-methionine = 2-methyladenosine(2503) in 23S rRNA + 5'-deoxyadenosine + L-methionine + 2 oxidized [2Fe-2S]-[ferredoxin] + S-adenosyl-L-homocysteine. It carries out the reaction adenosine(37) in tRNA + 2 reduced [2Fe-2S]-[ferredoxin] + 2 S-adenosyl-L-methionine = 2-methyladenosine(37) in tRNA + 5'-deoxyadenosine + L-methionine + 2 oxidized [2Fe-2S]-[ferredoxin] + S-adenosyl-L-homocysteine. Specifically methylates position 2 of adenine 2503 in 23S rRNA and position 2 of adenine 37 in tRNAs. m2A2503 modification seems to play a crucial role in the proofreading step occurring at the peptidyl transferase center and thus would serve to optimize ribosomal fidelity. The polypeptide is Dual-specificity RNA methyltransferase RlmN (Alkalilimnicola ehrlichii (strain ATCC BAA-1101 / DSM 17681 / MLHE-1)).